We begin with the raw amino-acid sequence, 309 residues long: Interferon-inducible double-stranded RNA-dependent protein kinase activator A homolog A (309 aa).

The disordered stretch occupies residues 1–22 (MSQERFPAAPKMSSEKPTSLDA). 3 consecutive DRBM domains span residues 31–98 (TPIQ…ILRG), 123–191 (NPVG…KFKT), and 236–304 (DYVK…YLKI).

Belongs to the PRKRA family. As to quaternary structure, homodimer. Interacts with dicer1 and eif2ak2/pkr. Also able to interact with dsRNA.

The protein localises to the cytoplasm. The protein resides in the perinuclear region. Its subcellular location is the nucleus. Activates eif2ak2/pkr in the absence of double-stranded RNA (dsRNA), leading to phosphorylation of eif2s1/efi2-alpha and inhibition of translation and induction of apoptosis. Required for siRNA production by dicer1 and for subsequent siRNA-mediated post-transcriptional gene silencing. Does not seem to be required for processing of pre-miRNA to miRNA by dicer1. The chain is Interferon-inducible double-stranded RNA-dependent protein kinase activator A homolog A (prkra-a) from Xenopus laevis (African clawed frog).